The chain runs to 397 residues: N(6)-adenosine-methyltransferase non-catalytic subunit METTL14 (397 aa).

Disordered regions lie at residues 37–67 (NAED…KKTP) and 368–397 (ELLR…GRPR). Residues 40-51 (DINSSRQLNSGG) show a composition bias toward polar residues. Residues 382-397 (LRGRGRGFPRGRGRPR) show a composition bias toward basic residues.

It belongs to the MT-A70-like family. Component of the WMM complex, a N6-methyltransferase complex composed of a catalytic subcomplex, named MAC, and of an associated subcomplex, named MACOM. The MAC subcomplex is composed of Ime4/Mettl3 and Mettl14. The MACOM subcomplex is composed of fl(2)d, Flacc/Xio, Hakai, vir, and, in some cases of nito.

It localises to the nucleus. Its function is as follows. Non-catalytic component of the WMM complex, a complex that mediates N6-methyladenosine (m6A) methylation of mRNAs, a modification that plays a role in the efficiency of mRNA splicing and is required for sex determination. In the heterodimer formed with Ime4/Mettl3, Mettl14 constitutes the RNA-binding scaffold that recognizes the substrate rather than the catalytic core. Required for sex determination and dosage compensation via Sxl alternative splicing: m6A methylation acts as a key regulator of Sxl pre-mRNA and promotes female-specific alternative splicing of Sxl, which determines female physiognomy. M6A methylation is also required for neuronal functions. The sequence is that of N(6)-adenosine-methyltransferase non-catalytic subunit METTL14 from Drosophila melanogaster (Fruit fly).